Consider the following 996-residue polypeptide: MPPPTFLLGLLLLLLLAAAAPAPASATPERDAYALSRLKASLVPSATNSTSAPLSDWDPAATPPAHCAFTGVTCDAATSRVVAINLTAVPLHGGALPPEVALLDALASLTVANCYLRGRLPPALASMPALRHLNLSNNNLSGPFPPPPPAAYFPALEIVDVYNNNLSGPLPPLGAPHARSLRYLHLGGNYFNGSIPDTFGDLAALEYLGLNGNALSGRVPPSLSRLSRLREMYVGYYNQYSGGVPREFGALQSLVRLDMSSCTLTGPIPPELARLSRLDTLFLALNQLTGEIPPELGALTSLRSLDLSINDLAGEIPASFAALTNLKLLNLFRNHLRGEIPAFLGDFPFLEVLQVWDNNLTGPLPPALGRNGRLKTLDVTSNHLTGTIPPDLCAGRNLQLLVLMDNGFFGSIPESLGDCKTLTRVRLGKNFLTGPVPAGLFDLPQANMLELTDNMLTGELPDVIAGDKIGMLMLGNNRIGGRIPAAIGNLPALQTLSLESNNFSGPLPPEIGRLRNLTRLNASGNALTGGIPRELMGCASLGAVDLSRNGLTGEIPDTVTSLKILCTLNVSRNRLSGELPAAMANMTSLTTLDVSYNQLSGPVPMQGQFLVFNESSFVGNPGLCSACPPSSGGARSPFSLRRWDSKKLLVWLVVLLTLLVLAVLGARKAHEAWREAARRRSGAWKMTAFQKLDFSADDVVECLKEDNIIGKGGAGIVYHGVTRGGAELAIKRLVGRGCGDHDRGFTAEVTTLGRIRHRNIVRLLGFVSNREANLLLYEYMPNGSLGEMLHGGKGGHLGWEARARVAAEAARGLCYLHHDCAPRIIHRDVKSNNILLDSAFEAHVADFGLAKFLGGGGATSECMSAIAGSYGYIAPEYAYTLRVDEKSDVYSFGVVLLELITGRRPVGSFGDGVDIVHWVRKVTADAAAAEEPVLLVADRRLAPEPVPLLADLYRVAMACVEEASTARPTMREVVHMLSTSAAAQPDVPHALCKVVD.

Residues 1–26 form the signal peptide; the sequence is MPPPTFLLGLLLLLLLAAAAPAPASA. LRR repeat units lie at residues 78–103, 104–127, 128–151, 153–178, 180–201, 202–226, 251–275, 276–299, 300–323, 325–349, 351–371, 372–395, 397–419, 420–443, 445–466, 467–490, 491–514, 516–538, 539–562, 563–586, and 587–611; these read TSRVVAINLTAVPLHGGALPPEVALL, DALASLTVANCYLRGRLPPALASM, PALRHLNLSNNNLSGPFPPPPPAA, FPALEIVDVYNNNLSGPLPPLGAPHA, SLRYLHLGGNYFNGSIPDTFGD, LAALEYLGLNGNALSGRVPPSLSRL, LQSLVRLDMSSCTLTGPIPPELARL, SRLDTLFLALNQLTGEIPPELGAL, TSLRSLDLSINDLAGEIPASFAAL, NLKLLNLFRNHLRGEIPAFLGDFPF, EVLQVWDNNLTGPLPPALGRN, GRLKTLDVTSNHLTGTIPPDLCAG, NLQLLVLMDNGFFGSIPESLGDC, KTLTRVRLGKNFLTGPVPAGLFDL, QANMLELTDNMLTGELPDVIAG, DKIGMLMLGNNRIGGRIPAAIGNL, PALQTLSLESNNFSGPLPPEIGRL, NLTRLNASGNALTGGIPRELMGC, ASLGAVDLSRNGLTGEIPDTVTSL, KILCTLNVSRNRLSGELPAAMANM, and TSLTTLDVSYNQLSGPVPMQGQFLV. The chain crosses the membrane as a helical span at residues 646–666; sequence KKLLVWLVVLLTLLVLAVLGA. The 276-residue stretch at 703 to 978 folds into the Protein kinase domain; sequence LKEDNIIGKG…TMREVVHMLS (276 aa). ATP-binding positions include 709 to 717 and Lys731; that span reads IGKGGAGIV. Asp828 functions as the Proton acceptor in the catalytic mechanism.

Belongs to the protein kinase superfamily. Ser/Thr protein kinase family. As to expression, highly expressed in the apex of the vegetative seedlings. Lower expression in young leaves, ears and tassels, embryos and roots. Not expressed in the shoot meristem itself. Detected in the three outermost layers of the inflorescence meristem, and on its flanks at positions of prospective spikelet pair meristems. Not confined to meristematic cells but also detected in primordia of glumes, lemmas and stamens.

Its subcellular location is the membrane. It carries out the reaction L-seryl-[protein] + ATP = O-phospho-L-seryl-[protein] + ADP + H(+). The enzyme catalyses L-threonyl-[protein] + ATP = O-phospho-L-threonyl-[protein] + ADP + H(+). Receptor-like kinase protein that regulates meristem size during inflorescence and flower development. Promotes vegetative meristem growth and restricts inflorescence and floral meristem growth. Based on additive and synergistic phenotypes of double mutants, it is probable that unlike CLV1 and CLV2 in A.thaliana, TD1 and FAE2 do not function exclusively in a single pathway. However, KN-1 and TD1 do function in a linear pathway to maintain vegetative meristem homeostasis, but they may interact with different partners during development. The sequence is that of Leucine-rich repeat receptor-like kinase protein THICK TASSEL DWARF1 (TD1) from Zea mays (Maize).